Consider the following 208-residue polypeptide: Putative 3-methyladenine DNA glycosylase (208 aa).

The disordered stretch occupies residues 1–20 (MGRAHTVSRGEDHPPIARSE).

Belongs to the DNA glycosylase MPG family.

This chain is Putative 3-methyladenine DNA glycosylase, found in Mesorhizobium japonicum (strain LMG 29417 / CECT 9101 / MAFF 303099) (Mesorhizobium loti (strain MAFF 303099)).